Consider the following 513-residue polypeptide: Na(+)/H(+) antiporter NhaB (513 aa).

12 helical membrane passes run 23 to 43 (LALI…PFVA), 52 to 72 (IFTL…LLAI), 97 to 117 (LLLM…LFIF), 120 to 140 (LLLS…AAAF), 144 to 164 (FLDA…FYGI), 202 to 222 (LMMH…VGEP), 238 to 258 (FFLR…LTCL), 303 to 323 (AIIG…VGLI), 348 to 368 (TESL…AVII), 391 to 411 (LFYI…VGTI), 447 to 467 (ATPN…APLI), and 475 to 495 (VWMA…CVEF).

Belongs to the NhaB Na(+)/H(+) (TC 2.A.34) antiporter family.

The protein localises to the cell inner membrane. The catalysed reaction is 2 Na(+)(in) + 3 H(+)(out) = 2 Na(+)(out) + 3 H(+)(in). Functionally, na(+)/H(+) antiporter that extrudes sodium in exchange for external protons. The chain is Na(+)/H(+) antiporter NhaB from Shigella flexneri serotype 5b (strain 8401).